The chain runs to 444 residues: Probable kynurenine--oxoglutarate transaminase BNA3 (444 aa).

K271 is modified (N6-(pyridoxal phosphate)lysine).

This sequence belongs to the class-I pyridoxal-phosphate-dependent aminotransferase family. As to quaternary structure, homodimer. Requires pyridoxal 5'-phosphate as cofactor.

It localises to the cytoplasm. It is found in the mitochondrion. It catalyses the reaction L-kynurenine + 2-oxoglutarate = kynurenate + L-glutamate + H2O. It participates in amino-acid degradation; L-kynurenine degradation; kynurenate from L-kynurenine: step 1/2. In terms of biological role, catalyzes the irreversible transamination of the L-tryptophan metabolite L-kynurenine to form kynurenic acid (KA). The protein is Probable kynurenine--oxoglutarate transaminase BNA3 (BNA3) of Saccharomyces cerevisiae (strain ATCC 204508 / S288c) (Baker's yeast).